We begin with the raw amino-acid sequence, 233 residues long: Lipoprotein-releasing system ATP-binding protein LolD (233 aa).

An ABC transporter domain is found at Leu-6 to Glu-233. Gly-42 to Ser-49 serves as a coordination point for ATP.

It belongs to the ABC transporter superfamily. Lipoprotein translocase (TC 3.A.1.125) family. The complex is composed of two ATP-binding proteins (LolD) and two transmembrane proteins (LolC and LolE).

It localises to the cell inner membrane. Part of the ABC transporter complex LolCDE involved in the translocation of mature outer membrane-directed lipoproteins, from the inner membrane to the periplasmic chaperone, LolA. Responsible for the formation of the LolA-lipoprotein complex in an ATP-dependent manner. This is Lipoprotein-releasing system ATP-binding protein LolD from Salmonella choleraesuis (strain SC-B67).